The sequence spans 288 residues: MAGAKEIRTKIASVKNTQKITKAMEMVATSKMRKTQERMAASRPYSETIRKVISHIAKGSIGYKHPFLTERDIKKVGYLVVSTDRGLCGGLNINLFKATLNEFKTWKDKDVSVELGLVGSKGVSFYQNLGLNVRSQVTGLGDNPEMERIVGAVNEMINAFRNGEVDAVYVAYNRFENTMSQKPVIAQLLPLPKLDDDELDTKGSWDYIYEPNPQVLLDSLLVRYLETQVYQAVVDNLASEQAARMVAMKAATDNAGTLIDELQLVYNKARQASITNELNEIVAGAAAI.

This sequence belongs to the ATPase gamma chain family. F-type ATPases have 2 components, CF(1) - the catalytic core - and CF(0) - the membrane proton channel. CF(1) has five subunits: alpha(3), beta(3), gamma(1), delta(1), epsilon(1). CF(0) has three main subunits: a, b and c.

Its subcellular location is the cell inner membrane. In terms of biological role, produces ATP from ADP in the presence of a proton gradient across the membrane. The gamma chain is believed to be important in regulating ATPase activity and the flow of protons through the CF(0) complex. The chain is ATP synthase gamma chain from Actinobacillus pleuropneumoniae serotype 5b (strain L20).